The chain runs to 651 residues: Acetyl-coenzyme A synthetase (651 aa).

CoA-binding positions include 189–192, Thr311, and Asn335; that span reads RGGK. Residues 387–389, 411–416, Asp500, and Arg515 each bind ATP; these read GEP and DTWWQT. CoA is bound at residue Ser523. Arg526 contributes to the ATP binding site. Positions 537, 539, and 542 each coordinate Mg(2+). Arg584 serves as a coordination point for CoA. N6-acetyllysine is present on Lys609.

It belongs to the ATP-dependent AMP-binding enzyme family. It depends on Mg(2+) as a cofactor. Acetylated. Deacetylation by the SIR2-homolog deacetylase activates the enzyme.

It carries out the reaction acetate + ATP + CoA = acetyl-CoA + AMP + diphosphate. Its function is as follows. Catalyzes the conversion of acetate into acetyl-CoA (AcCoA), an essential intermediate at the junction of anabolic and catabolic pathways. AcsA undergoes a two-step reaction. In the first half reaction, AcsA combines acetate with ATP to form acetyl-adenylate (AcAMP) intermediate. In the second half reaction, it can then transfer the acetyl group from AcAMP to the sulfhydryl group of CoA, forming the product AcCoA. In Rhizobium leguminosarum bv. trifolii (strain WSM2304), this protein is Acetyl-coenzyme A synthetase.